A 318-amino-acid polypeptide reads, in one-letter code: Transaldolase (318 aa).

The Schiff-base intermediate with substrate role is filled by Lys126.

It belongs to the transaldolase family. Type 1 subfamily. In terms of assembly, homodimer.

The protein resides in the cytoplasm. The enzyme catalyses D-sedoheptulose 7-phosphate + D-glyceraldehyde 3-phosphate = D-erythrose 4-phosphate + beta-D-fructose 6-phosphate. Its pathway is carbohydrate degradation; pentose phosphate pathway; D-glyceraldehyde 3-phosphate and beta-D-fructose 6-phosphate from D-ribose 5-phosphate and D-xylulose 5-phosphate (non-oxidative stage): step 2/3. In terms of biological role, transaldolase is important for the balance of metabolites in the pentose-phosphate pathway. This is Transaldolase from Variovorax paradoxus (strain S110).